Consider the following 165-residue polypeptide: Regulator of ribonuclease activity A (165 aa).

It belongs to the RraA family. In terms of assembly, homotrimer. Binds to both RNA-binding sites in the C-terminal region of Rne and to RhlB.

The protein localises to the cytoplasm. In terms of biological role, globally modulates RNA abundance by binding to RNase E (Rne) and regulating its endonucleolytic activity. Can modulate Rne action in a substrate-dependent manner by altering the composition of the degradosome. Modulates RNA-binding and helicase activities of the degradosome. The protein is Regulator of ribonuclease activity A of Actinobacillus pleuropneumoniae serotype 7 (strain AP76).